We begin with the raw amino-acid sequence, 698 residues long: Quillaic acid 3-O-glycosyltransferase CSL1 (698 aa).

A helical membrane pass occupies residues A14–Y34. An N-linked (GlcNAc...) asparagine glycan is attached at N38. The chain crosses the membrane as a helical span at residues G42–T62. The UDP-alpha-D-glucose site is built by K99 and E100. The active site involves D129. N317 carries N-linked (GlcNAc...) asparagine glycosylation. The active site involves S436. The next 6 helical transmembrane spans lie at W478–S498, Y508–L528, W546–L566, I581–K601, M636–L656, and F669–I689.

This sequence belongs to the glycosyltransferase 2 family. Plant cellulose synthase-like G subfamily. As to expression, mainly expressed in flowers and flower buds and, to a lesser extent, in leaves, stems and roots.

The protein localises to the golgi apparatus membrane. It functions in the pathway secondary metabolite biosynthesis; terpenoid biosynthesis. Component of the oleanane-type triterpene saponins (e.g. saponarioside A and saponarioside B) biosynthetic pathway, leading to the production of natural products with detergent properties used as traditional sources of soap. Glycosyltransferase that mediates the conversion of quillaic acid (QA) to QA-mono via the initiation of the C-3 sugar chain. This Saponaria officinalis (Common soapwort) protein is Quillaic acid 3-O-glycosyltransferase CSL1.